We begin with the raw amino-acid sequence, 199 residues long: WASH complex subunit 3 (199 aa).

Residues 47 to 76 (VCEEKLSALSLRIQQIETTLNILEAKLSSI) are a coiled coil. A compositionally biased stretch (polar residues) spans 93-120 (NISNGHLPSQPDAQSVVVSPQSDNNSMN). Disordered regions lie at residues 93 to 136 (NISN…NITT) and 170 to 199 (PDLL…SFSD). Positions 183–192 (GEPEAEESSD) are enriched in acidic residues.

The protein belongs to the CCDC53 family. Component of the WASH complex.

The polypeptide is WASH complex subunit 3 (Xenopus laevis (African clawed frog)).